Here is a 96-residue protein sequence, read N- to C-terminus: Small ribosomal subunit protein bS18 (96 aa).

This sequence belongs to the bacterial ribosomal protein bS18 family. Part of the 30S ribosomal subunit. Forms a tight heterodimer with protein bS6.

In terms of biological role, binds as a heterodimer with protein bS6 to the central domain of the 16S rRNA, where it helps stabilize the platform of the 30S subunit. This is Small ribosomal subunit protein bS18 from Gluconobacter oxydans (strain 621H) (Gluconobacter suboxydans).